The following is a 37-amino-acid chain: Large ribosomal subunit protein bL36c (37 aa).

This sequence belongs to the bacterial ribosomal protein bL36 family.

Its subcellular location is the plastid. The protein resides in the chloroplast. This Liriodendron tulipifera (Tuliptree) protein is Large ribosomal subunit protein bL36c.